The sequence spans 882 residues: Protein O-mannosyl-transferase TMTC1 (882 aa).

Over 1–20 (MVVTTSARGGGGDRTPSRRR) the chain is Cytoplasmic. The disordered stretch occupies residues 1–20 (MVVTTSARGGGGDRTPSRRR). Residues 21 to 41 (GCGLAPAGAAALLAGASCLCY) traverse the membrane as a helical segment. The Extracellular segment spans residues 42–110 (GRSLQGEFVH…KLNIFLTGMN (69 aa)). Asn-86 carries N-linked (GlcNAc...) asparagine glycosylation. The chain crosses the membrane as a helical span at residues 111–131 (PFYFHAVNIILHCLVTLVLMY). Residues 132 to 137 (TCDKTV) lie on the Cytoplasmic side of the membrane. Residues 138 to 157 (FKNRGLAFVTALLFAVHPIH) form a helical membrane-spanning segment. Topologically, residues 158-160 (TEA) are extracellular. A helical membrane pass occupies residues 161-181 (VAGIVGRADVLACLLFLLAFL). Residues 182–197 (SYNRSLDQGCVGGSFP) lie on the Cytoplasmic side of the membrane. A helical membrane pass occupies residues 198 to 218 (STVSPFFLLLSLFLGTCAMLV). Residues 219–221 (KET) are Extracellular-facing. Residues 222–238 (GITVFGVCLVYDLFSLS) traverse the membrane as a helical segment. Residues 239–313 (NKQDKSSNGA…SPRAVWSMMR (75 aa)) lie on the Cytoplasmic side of the membrane. Residues 246–277 (NGALCPRSPQQPGSPQPSSLPGHPHRENGKQQ) are disordered. Low complexity predominate over residues 251–267 (PRSPQQPGSPQPSSLPG). The chain crosses the membrane as a helical span at residues 314 to 334 (FLTYSYLLAFNVWLLLAPVTL). Residues 335-354 (CYDWQVGSIPLVETIWDMRN) are Extracellular-facing. A helical transmembrane segment spans residues 355-375 (LATIFLAVVMALLSLHCLAAF). Over 376 to 381 (KRLEHK) the chain is Cytoplasmic. Residues 382–402 (EVLVGLLFLVFPFIPASNLFF) traverse the membrane as a helical segment. Arg-403 is a topological domain (extracellular). Residues 404 to 424 (VGFVVAERVLYMPSMGYCILF) traverse the membrane as a helical segment. The Cytoplasmic segment spans residues 425–438 (VHGLSKLCTWLNRC). The chain crosses the membrane as a helical span at residues 439–459 (GATTLIVSTVLLLLLFSWKTV). Over 460–882 (KQNEIWLSRE…LQEVREKDQT (423 aa)) the chain is Extracellular. 10 TPR repeats span residues 483–516 (AKVH…YPRH), 517–547 (ASAL…HPQH), 548–581 (NRAL…GPEF), 582–615 (ADAY…CPDS), 616–649 (SDLH…SPSH), 650–682 (HVAM…VAHK), 683–716 (AEIL…QPSQ), 751–784 (LECY…KPKD), 789–822 (SELF…NPDQ), and 823–856 (AQAW…VPDS).

The protein belongs to the TMTC family. May interact with FAM168B.

Its subcellular location is the membrane. It localises to the endoplasmic reticulum. The enzyme catalyses a di-trans,poly-cis-dolichyl beta-D-mannosyl phosphate + L-seryl-[protein] = 3-O-(alpha-D-mannosyl)-L-seryl-[protein] + a di-trans,poly-cis-dolichyl phosphate + H(+). The catalysed reaction is a di-trans,poly-cis-dolichyl beta-D-mannosyl phosphate + L-threonyl-[protein] = 3-O-(alpha-D-mannosyl)-L-threonyl-[protein] + a di-trans,poly-cis-dolichyl phosphate + H(+). Its pathway is protein modification; protein glycosylation. Functionally, transfers mannosyl residues to the hydroxyl group of serine or threonine residues. The 4 members of the TMTC family are O-mannosyl-transferases dedicated primarily to the cadherin superfamily, each member seems to have a distinct role in decorating the cadherin domains with O-linked mannose glycans at specific regions. Also acts as O-mannosyl-transferase on other proteins such as PDIA3. The protein is Protein O-mannosyl-transferase TMTC1 of Homo sapiens (Human).